We begin with the raw amino-acid sequence, 208 residues long: Ribosomal RNA small subunit methyltransferase G (208 aa).

Residues G76, L81, 127–128 (VE), and R142 contribute to the S-adenosyl-L-methionine site.

The protein belongs to the methyltransferase superfamily. RNA methyltransferase RsmG family.

It is found in the cytoplasm. The enzyme catalyses guanosine(527) in 16S rRNA + S-adenosyl-L-methionine = N(7)-methylguanosine(527) in 16S rRNA + S-adenosyl-L-homocysteine. Functionally, specifically methylates the N7 position of guanine in position 527 of 16S rRNA. The polypeptide is Ribosomal RNA small subunit methyltransferase G (Legionella pneumophila (strain Corby)).